A 944-amino-acid chain; its full sequence is Nonsense-mediated mRNA decay factor SMG8 (944 aa).

2 disordered regions span residues 559–601 (LNNG…SNCC) and 629–654 (ASSE…TDNE). Residues 568–589 (QDEDAEEDEAEEEEGQEQEQPT) show a composition bias toward acidic residues. Over residues 629 to 640 (ASSEQLLNSEQN) the composition is skewed to polar residues. The span at 641–650 (TTSSGTSSAD) shows a compositional bias: low complexity.

Belongs to the SMG8 family.

Its function is as follows. Involved in nonsense-mediated decay (NMD) of mRNAs containing premature stop codons. Probable component of kinase complex containing nonC and recruited to stalled ribosomes. The polypeptide is Nonsense-mediated mRNA decay factor SMG8 (Drosophila melanogaster (Fruit fly)).